The following is a 62-amino-acid chain: Alpha-conotoxin ViIA (62 aa).

The first 18 residues, 1 to 18, serve as a signal peptide directing secretion; the sequence is MGMRMMFVVFLLVVFASS. A propeptide spanning residues 19–45 is cleaved from the precursor; it reads VTLDRASYGRYASPVDRASALIAQAIL. 2 cysteine pairs are disulfide-bonded: cysteine 48-cysteine 54 and cysteine 49-cysteine 61.

It belongs to the conotoxin A superfamily. In terms of processing, the toxin is inactive on the alpha-3-beta-2 nAChR when the disulfide bond connectivity is C1-C4 and C2-C3 (ViIA-I) (IC(50)&gt;10000 nM). Expressed by the venom duct.

It is found in the secreted. Its function is as follows. Alpha-conotoxins act on postsynaptic membranes, they bind to the nicotinic acetylcholine receptors (nAChR) and thus inhibit them. This toxin selectively inhibits nicotinic acetylcholine receptor (nAChR) alpha-3-beta-2 subtype (IC(50)=845.5 nM). The chain is Alpha-conotoxin ViIA from Conus virgo (Virgin cone).